The chain runs to 338 residues: 1-aminocyclopropane-1-carboxylate deaminase (338 aa).

K51 carries the post-translational modification N6-(pyridoxal phosphate)lysine. S78 (nucleophile) is an active-site residue.

The protein belongs to the ACC deaminase/D-cysteine desulfhydrase family. As to quaternary structure, homotrimer. Pyridoxal 5'-phosphate is required as a cofactor.

It catalyses the reaction 1-aminocyclopropane-1-carboxylate + H2O = 2-oxobutanoate + NH4(+). In terms of biological role, catalyzes a cyclopropane ring-opening reaction, the irreversible conversion of 1-aminocyclopropane-1-carboxylate (ACC) to ammonia and alpha-ketobutyrate. Allows growth on ACC as a nitrogen source. The polypeptide is 1-aminocyclopropane-1-carboxylate deaminase (Burkholderia pseudomallei (strain 1106a)).